We begin with the raw amino-acid sequence, 79 residues long: Probable 26S proteasome complex subunit sem1 (79 aa).

The span at 1–21 (MSAPDKEKEKEKEETNNKSED) shows a compositional bias: basic and acidic residues. The segment at 1–30 (MSAPDKEKEKEKEETNNKSEDLGLLEEDDE) is disordered. S19 is subject to Phosphoserine.

This sequence belongs to the DSS1/SEM1 family. Part of the 26S proteasome.

Subunit of the 26S proteasome which plays a role in ubiquitin-dependent proteolysis. In Drosophila melanogaster (Fruit fly), this protein is Probable 26S proteasome complex subunit sem1.